The sequence spans 383 residues: Fructose-1,6-bisphosphate aldolase/phosphatase (383 aa).

Aspartate 11 (proton acceptor; for FBP phosphatase activity) is an active-site residue. Mg(2+)-binding residues include aspartate 11, histidine 18, aspartate 52, and aspartate 53. Histidine 18 serves as a coordination point for beta-D-fructose 1,6-bisphosphate. Residue histidine 18 coordinates dihydroxyacetone phosphate. Tyrosine 90 provides a ligand contact to beta-D-fructose 1,6-bisphosphate. Glutamine 94 provides a ligand contact to Mg(2+). 103–104 (GN) serves as a coordination point for beta-D-fructose 1,6-bisphosphate. Aspartate 131 serves as a coordination point for Mg(2+). Lysine 132 serves as a coordination point for beta-D-fructose 1,6-bisphosphate. Lysine 132 contacts dihydroxyacetone phosphate. Catalysis depends on tyrosine 228, which acts as the Proton donor/acceptor; for FBP aldolase activity. Positions 231, 232, and 233 each coordinate Mg(2+). Lysine 231 serves as the catalytic Schiff-base intermediate with DHAP; for FBP aldolase activity. Beta-D-fructose 1,6-bisphosphate is bound by residues 241–242 (QH), arginine 265, aspartate 286, and tyrosine 347. Residues arginine 265 and aspartate 286 each coordinate dihydroxyacetone phosphate. Positions 361–383 (FKKEEDVKKAKPSVYTSKDQGMD) are disordered. Polar residues predominate over residues 374–383 (VYTSKDQGMD).

Belongs to the FBP aldolase/phosphatase family. In terms of assembly, homooctamer; dimer of tetramers. Mg(2+) serves as cofactor.

The enzyme catalyses beta-D-fructose 1,6-bisphosphate + H2O = beta-D-fructose 6-phosphate + phosphate. It carries out the reaction beta-D-fructose 1,6-bisphosphate = D-glyceraldehyde 3-phosphate + dihydroxyacetone phosphate. It participates in carbohydrate biosynthesis; gluconeogenesis. In terms of biological role, catalyzes two subsequent steps in gluconeogenesis: the aldol condensation of dihydroxyacetone phosphate (DHAP) and glyceraldehyde-3-phosphate (GA3P) to fructose-1,6-bisphosphate (FBP), and the dephosphorylation of FBP to fructose-6-phosphate (F6P). This is Fructose-1,6-bisphosphate aldolase/phosphatase from Metallosphaera sedula (strain ATCC 51363 / DSM 5348 / JCM 9185 / NBRC 15509 / TH2).